The chain runs to 329 residues: Succinylglutamate desuccinylase (329 aa).

Zn(2+) contacts are provided by His53, Glu56, and His148. Glu211 is a catalytic residue.

This sequence belongs to the AspA/AstE family. Succinylglutamate desuccinylase subfamily. It depends on Zn(2+) as a cofactor.

The enzyme catalyses N-succinyl-L-glutamate + H2O = L-glutamate + succinate. It functions in the pathway amino-acid degradation; L-arginine degradation via AST pathway; L-glutamate and succinate from L-arginine: step 5/5. Functionally, transforms N(2)-succinylglutamate into succinate and glutamate. In Erwinia tasmaniensis (strain DSM 17950 / CFBP 7177 / CIP 109463 / NCPPB 4357 / Et1/99), this protein is Succinylglutamate desuccinylase.